The sequence spans 47 residues: High light-inducible protein HliC (47 aa).

Topologically, residues 1 to 14 (MNNENSKFGFTAFA) are cytoplasmic. The Chlorophyll-binding motif motif lies at 15-20 (ENWNGR). The segment at 15–36 (ENWNGRLAMIGFSSALILELVS) is a transmembrane helix. The Lumenal, thylakoid segment spans residues 37–47 (GQGVLHFFGIL).

It belongs to the Hlip family. Forms heterodimers with both HliA and HliB; these are associated with photosystem II (PSII) assembly intermediates containing CP47 (psbB). In the absence of CP47 (psbB) and HliD, forms a homooligomer in vivo that binds 2 chlorophyll a and 1 beta-carotenoid per monomer. Cofractionates in an approximately 50 kDa fraction the thylakoid membrane with HliD. Associated in vivo with monomeric PSII. Purified in several chlorophyll- and carotenoid-containing complexes, including photosystem II (PSII) assembly intermediate complex RCII* (iD1, D1, D2, PsbE, PsbF, PsbI, Ycf39, Ycf48, HliC and HliD) and the Ycf39-Hlip complex (Ycf39, HliC, HliD and pigments).

The protein localises to the cellular thylakoid membrane. In terms of biological role, forms a number of heteromers involved in photosystem II (PSII) assembly and/or repair under high light stress. Required for binding of chlorophyll and carotenoids by the Ycf39-Hlip complex. The Ycf39-Hlip complex binds D1 at an early stage of PSII assembly along with Ycf48, ribosomes and ChlG, the last enzyme in chlorophyll biosynthesis; it may be involved in chlorophyll reuse and delivery to D1 in the initial stages of PSII assembly. HliA-HliC and HliB-HliC heterodimers bind chlorophyll and carotenoids in a 1:0.6 ratio. Complexes bind mostly beta-carotenoid, but minor amounts of echinenone and beta-crytoxanthin are also detected. The complexes efficiently quench chlorophyll fluorescence, contributing to photoprotection. Deletion of 4 to 5 members of the Hlip family suggests the proteins are involved in regulation of chlorophyll biosynthesis, in stabilization of chlorophyll-binding proteins and/or in reuse of chlorophylls, and may regulate tetrapyrrole biosynthesis. Might bind chlorophyll and/or carotenoids in association with HliD (called the ScpBE pair). The Hlips might regulate tetrapyrrole biosynthesis, maybe at the level of aminolevulinic acid synthesis and probably stabilize PSII assembly intermediates. The sequence is that of High light-inducible protein HliC (hliC) from Synechocystis sp. (strain ATCC 27184 / PCC 6803 / Kazusa).